The following is a 409-amino-acid chain: 4-hydroxy-3-methylbut-2-en-1-yl diphosphate synthase (ferredoxin) (409 aa).

Residues 1–12 (MQTLDRPNAPTQ) are compositionally biased toward polar residues. Positions 1-22 (MQTLDRPNAPTQQPYPEPVYPR) are disordered. [4Fe-4S] cluster-binding residues include Cys-314, Cys-317, Cys-348, and Glu-355.

Belongs to the IspG family. [4Fe-4S] cluster is required as a cofactor.

The catalysed reaction is (2E)-4-hydroxy-3-methylbut-2-enyl diphosphate + 2 oxidized [2Fe-2S]-[ferredoxin] + H2O = 2-C-methyl-D-erythritol 2,4-cyclic diphosphate + 2 reduced [2Fe-2S]-[ferredoxin] + H(+). The protein operates within isoprenoid biosynthesis; isopentenyl diphosphate biosynthesis via DXP pathway; isopentenyl diphosphate from 1-deoxy-D-xylulose 5-phosphate: step 5/6. Converts 2C-methyl-D-erythritol 2,4-cyclodiphosphate (ME-2,4cPP) into 1-hydroxy-2-methyl-2-(E)-butenyl 4-diphosphate. In Synechococcus sp. (strain JA-2-3B'a(2-13)) (Cyanobacteria bacterium Yellowstone B-Prime), this protein is 4-hydroxy-3-methylbut-2-en-1-yl diphosphate synthase (ferredoxin).